The following is a 630-amino-acid chain: Alpha-1,4-glucan:maltose-1-phosphate maltosyltransferase (630 aa).

Residues Arg234, Gln294, and Asp329 each coordinate alpha-maltose 1-phosphate. Asp365 serves as the catalytic Nucleophile. An alpha-maltose 1-phosphate-binding site is contributed by Asn366. The Proton donor role is filled by Glu394. 504–505 lines the alpha-maltose 1-phosphate pocket; sequence KY.

This sequence belongs to the glycosyl hydrolase 13 family. GlgE subfamily. Homodimer.

The enzyme catalyses alpha-maltose 1-phosphate + [(1-&gt;4)-alpha-D-glucosyl](n) = [(1-&gt;4)-alpha-D-glucosyl](n+2) + phosphate. Functionally, maltosyltransferase that uses maltose 1-phosphate (M1P) as the sugar donor to elongate linear or branched alpha-(1-&gt;4)-glucans. Is involved in a branched alpha-glucan biosynthetic pathway from trehalose, together with TreS, Mak and GlgB. The polypeptide is Alpha-1,4-glucan:maltose-1-phosphate maltosyltransferase (Picrophilus torridus (strain ATCC 700027 / DSM 9790 / JCM 10055 / NBRC 100828 / KAW 2/3)).